We begin with the raw amino-acid sequence, 353 residues long: 3-isopropylmalate dehydrogenase (353 aa).

Residue 73–86 (GPQYDTLDRPLRPE) participates in NAD(+) binding. Arg-93, Arg-103, Arg-131, and Asp-220 together coordinate substrate. Mg(2+)-binding residues include Asp-220, Asp-244, and Asp-248. 278-290 (GSAPDIAGKNLAN) contacts NAD(+).

It belongs to the isocitrate and isopropylmalate dehydrogenases family. LeuB type 1 subfamily. As to quaternary structure, homodimer. Mg(2+) serves as cofactor. It depends on Mn(2+) as a cofactor.

The protein localises to the cytoplasm. It carries out the reaction (2R,3S)-3-isopropylmalate + NAD(+) = 4-methyl-2-oxopentanoate + CO2 + NADH. It functions in the pathway amino-acid biosynthesis; L-leucine biosynthesis; L-leucine from 3-methyl-2-oxobutanoate: step 3/4. Catalyzes the oxidation of 3-carboxy-2-hydroxy-4-methylpentanoate (3-isopropylmalate) to 3-carboxy-4-methyl-2-oxopentanoate. The product decarboxylates to 4-methyl-2 oxopentanoate. The sequence is that of 3-isopropylmalate dehydrogenase from Thiobacillus denitrificans (strain ATCC 25259 / T1).